Reading from the N-terminus, the 236-residue chain is 6-carboxyhexanoate--CoA ligase (236 aa).

This sequence belongs to the BioW family. As to quaternary structure, homodimer. Mg(2+) is required as a cofactor.

It catalyses the reaction heptanedioate + ATP + CoA = 6-carboxyhexanoyl-CoA + AMP + diphosphate. It functions in the pathway metabolic intermediate metabolism; pimeloyl-CoA biosynthesis; pimeloyl-CoA from pimelate: step 1/1. Its function is as follows. Catalyzes the transformation of pimelate into pimeloyl-CoA with concomitant hydrolysis of ATP to AMP. This is 6-carboxyhexanoate--CoA ligase from Methanococcus aeolicus (strain ATCC BAA-1280 / DSM 17508 / OCM 812 / Nankai-3).